Reading from the N-terminus, the 393-residue chain is Protein TsgA (393 aa).

12 helical membrane passes run 11 to 31 (WISFLSYALTGALVIVTGMVM), 51 to 71 (FLNAGILISIFLNAWLMEIVP), 78 to 98 (FGFLLMVLAVAGLMFSHSLAL), 101 to 121 (AAMFILGVVSGITMSIGTFLV), 134 to 154 (LLFTDSFFSMAGMIFPMIAAF), 162 to 182 (WYWVYACIGLVYVAIFILTFG), 206 to 226 (IGVLFLSVAALCYILGQLGFI), 245 to 265 (TLVSNFWMSYMVGMWAFSFIL), 273 to 293 (ILTVLAGLAAILMYVFNTGTP), 297 to 317 (AWSILALGFFSSAIYTTIITL), 332 to 352 (FVLTCGTIGTMLTFVVTGPIV), and 361 to 381 (LLTANGLYAVVFVMCFLLGFV).

This sequence belongs to the major facilitator superfamily. TsgA family.

Its subcellular location is the cell inner membrane. The chain is Protein TsgA from Escherichia coli O6:K15:H31 (strain 536 / UPEC).